The sequence spans 492 residues: Bifunctional purine biosynthesis protein PurH (492 aa).

Positions 1 to 144 constitute an MGS-like domain; it reads MKKAILSVSN…KNYKHVTTIV (144 aa).

It belongs to the PurH family.

It carries out the reaction (6R)-10-formyltetrahydrofolate + 5-amino-1-(5-phospho-beta-D-ribosyl)imidazole-4-carboxamide = 5-formamido-1-(5-phospho-D-ribosyl)imidazole-4-carboxamide + (6S)-5,6,7,8-tetrahydrofolate. It catalyses the reaction IMP + H2O = 5-formamido-1-(5-phospho-D-ribosyl)imidazole-4-carboxamide. It participates in purine metabolism; IMP biosynthesis via de novo pathway; 5-formamido-1-(5-phospho-D-ribosyl)imidazole-4-carboxamide from 5-amino-1-(5-phospho-D-ribosyl)imidazole-4-carboxamide (10-formyl THF route): step 1/1. It functions in the pathway purine metabolism; IMP biosynthesis via de novo pathway; IMP from 5-formamido-1-(5-phospho-D-ribosyl)imidazole-4-carboxamide: step 1/1. The chain is Bifunctional purine biosynthesis protein PurH from Staphylococcus aureus (strain bovine RF122 / ET3-1).